The following is a 338-amino-acid chain: Glycerol-3-phosphate dehydrogenase [NAD(P)+] (338 aa).

NADPH contacts are provided by serine 13, tryptophan 14, and lysine 108. Positions 108, 139, and 141 each coordinate sn-glycerol 3-phosphate. Alanine 143 provides a ligand contact to NADPH. The sn-glycerol 3-phosphate site is built by lysine 194, aspartate 247, serine 257, arginine 258, and asparagine 259. Lysine 194 acts as the Proton acceptor in catalysis. Arginine 258 lines the NADPH pocket. NADPH contacts are provided by valine 282 and glutamate 284.

Its subcellular location is the cytoplasm. The catalysed reaction is sn-glycerol 3-phosphate + NAD(+) = dihydroxyacetone phosphate + NADH + H(+). It catalyses the reaction sn-glycerol 3-phosphate + NADP(+) = dihydroxyacetone phosphate + NADPH + H(+). It participates in membrane lipid metabolism; glycerophospholipid metabolism. Its function is as follows. Catalyzes the reduction of the glycolytic intermediate dihydroxyacetone phosphate (DHAP) to sn-glycerol 3-phosphate (G3P), the key precursor for phospholipid synthesis. The sequence is that of Glycerol-3-phosphate dehydrogenase [NAD(P)+] from Streptococcus pyogenes serotype M6 (strain ATCC BAA-946 / MGAS10394).